Here is a 346-residue protein sequence, read N- to C-terminus: Uroporphyrinogen decarboxylase (346 aa).

Substrate is bound by residues 21 to 25 (RQAGR), phenylalanine 40, aspartate 71, tyrosine 146, serine 201, and histidine 316.

It belongs to the uroporphyrinogen decarboxylase family. As to quaternary structure, homodimer.

It localises to the cytoplasm. It carries out the reaction uroporphyrinogen III + 4 H(+) = coproporphyrinogen III + 4 CO2. Its pathway is porphyrin-containing compound metabolism; protoporphyrin-IX biosynthesis; coproporphyrinogen-III from 5-aminolevulinate: step 4/4. Catalyzes the decarboxylation of four acetate groups of uroporphyrinogen-III to yield coproporphyrinogen-III. The polypeptide is Uroporphyrinogen decarboxylase (Rickettsia felis (strain ATCC VR-1525 / URRWXCal2) (Rickettsia azadi)).